Reading from the N-terminus, the 214-residue chain is dITP/XTP pyrophosphatase (214 aa).

Residue S13–K18 coordinates substrate. Residues E45 and D74 each coordinate Mg(2+). Residue D74 is the Proton acceptor of the active site. Substrate is bound by residues S75, F163–D166, K186, and H199–R200.

Belongs to the HAM1 NTPase family. In terms of assembly, homodimer. Mg(2+) is required as a cofactor.

It catalyses the reaction XTP + H2O = XMP + diphosphate + H(+). It carries out the reaction dITP + H2O = dIMP + diphosphate + H(+). The enzyme catalyses ITP + H2O = IMP + diphosphate + H(+). In terms of biological role, pyrophosphatase that catalyzes the hydrolysis of nucleoside triphosphates to their monophosphate derivatives, with a high preference for the non-canonical purine nucleotides XTP (xanthosine triphosphate), dITP (deoxyinosine triphosphate) and ITP. Seems to function as a house-cleaning enzyme that removes non-canonical purine nucleotides from the nucleotide pool, thus preventing their incorporation into DNA/RNA and avoiding chromosomal lesions. This chain is dITP/XTP pyrophosphatase, found in Agrobacterium fabrum (strain C58 / ATCC 33970) (Agrobacterium tumefaciens (strain C58)).